The primary structure comprises 333 residues: NADH dehydrogenase (ubiquinone) complex I, assembly factor 6 (333 aa).

Residues 1 to 44 (MAASTLGSAWGPLRLGVPGLCRRRPPRGLWARARRLSEPVASGR) constitute a mitochondrion transit peptide.

This sequence belongs to the NDUFAF6 family.

The protein localises to the mitochondrion inner membrane. In terms of biological role, involved in the assembly of mitochondrial NADH:ubiquinone oxidoreductase complex (complex I) at early stages. May play a role in the biogenesis of complex I subunit MT-ND1. This chain is NADH dehydrogenase (ubiquinone) complex I, assembly factor 6 (NDUFAF6), found in Bos taurus (Bovine).